The primary structure comprises 96 residues: Large ribosomal subunit protein uL23 (96 aa).

Belongs to the universal ribosomal protein uL23 family. Part of the 50S ribosomal subunit. Contacts protein L29, and trigger factor when it is bound to the ribosome.

Functionally, one of the early assembly proteins it binds 23S rRNA. One of the proteins that surrounds the polypeptide exit tunnel on the outside of the ribosome. Forms the main docking site for trigger factor binding to the ribosome. The protein is Large ribosomal subunit protein uL23 of Finegoldia magna (strain ATCC 29328 / DSM 20472 / WAL 2508) (Peptostreptococcus magnus).